Reading from the N-terminus, the 360-residue chain is 1-aminocyclopropane-1-carboxylate oxidase homolog 6 (360 aa).

The Fe2OG dioxygenase domain maps to 208–309 (KGLLLLCHYY…ISVASFFSTS (102 aa)). Fe cation contacts are provided by His232, Asp234, and His288. Position 299 (Arg299) interacts with 2-oxoglutarate.

It belongs to the iron/ascorbate-dependent oxidoreductase family. Fe(2+) is required as a cofactor. As to expression, constitutively expressed in leaves and blades.

This chain is 1-aminocyclopropane-1-carboxylate oxidase homolog 6, found in Arabidopsis thaliana (Mouse-ear cress).